Here is a 503-residue protein sequence, read N- to C-terminus: Poxin-Schlafen (503 aa).

Residues 1-236 (MFYAHAFGGY…SKEERVDYVL (236 aa)) form a poxin-like region. The Proton donor role is filled by H15. Catalysis depends on Y136, which acts as the Shared with catalytic histidine of dimeric partner. K140 (proton acceptor; shared with catalytic histidine of dimeric partner) is an active-site residue. A schlafen-like region spans residues 237–503 (MKRLESIHHL…PDEWVSHIKF (267 aa)).

In the N-terminal section; belongs to the poxin family. The protein in the C-terminal section; belongs to the Schlafen protein family. Subgroup poxviridae B3 subfamily. As to quaternary structure, homodimer.

The enzyme catalyses 2',3'-cGAMP + H2O = Gp(2'-5')Ap(3') + H(+). Functionally, nuclease that is responsible for viral evasion of host cGAS-STING innate immunity. Cleaves 2',3'-cGAMP which is produced by host cGAS following recognition of intracellular foreign DNA and blocks the subsequent 2',3'-cGAMP-mediated activation of TMEM173/STING which normally spreads to adjacent cells and activates the interferon and NF-kappa-B immune responses. This Cynomys gunnisoni (Gunnison's prairie dog) protein is Poxin-Schlafen (OPG188).